We begin with the raw amino-acid sequence, 89 residues long: Small ribosomal subunit protein uS19 (89 aa).

It belongs to the universal ribosomal protein uS19 family.

Protein S19 forms a complex with S13 that binds strongly to the 16S ribosomal RNA. This is Small ribosomal subunit protein uS19 from Xylella fastidiosa (strain 9a5c).